Reading from the N-terminus, the 225-residue chain is NAD(P)H-quinone oxidoreductase subunit K, chloroplastic (225 aa).

[4Fe-4S] cluster is bound by residues cysteine 43, cysteine 44, cysteine 108, and cysteine 139.

Belongs to the complex I 20 kDa subunit family. As to quaternary structure, NDH is composed of at least 16 different subunits, 5 of which are encoded in the nucleus. [4Fe-4S] cluster is required as a cofactor.

It localises to the plastid. The protein localises to the chloroplast thylakoid membrane. The catalysed reaction is a plastoquinone + NADH + (n+1) H(+)(in) = a plastoquinol + NAD(+) + n H(+)(out). It catalyses the reaction a plastoquinone + NADPH + (n+1) H(+)(in) = a plastoquinol + NADP(+) + n H(+)(out). Functionally, NDH shuttles electrons from NAD(P)H:plastoquinone, via FMN and iron-sulfur (Fe-S) centers, to quinones in the photosynthetic chain and possibly in a chloroplast respiratory chain. The immediate electron acceptor for the enzyme in this species is believed to be plastoquinone. Couples the redox reaction to proton translocation, and thus conserves the redox energy in a proton gradient. The polypeptide is NAD(P)H-quinone oxidoreductase subunit K, chloroplastic (Nymphaea alba (White water-lily)).